A 441-amino-acid polypeptide reads, in one-letter code: Probable cytosolic Fe-S cluster assembly factor v1g210509 (441 aa).

[4Fe-4S] cluster is bound by residues C24, C72, C75, C78, C196, C252, and C401.

It belongs to the NARF family.

Functionally, component of the cytosolic iron-sulfur (Fe/S) protein assembly machinery. Required for maturation of extramitochondrial Fe/S proteins. This Nematostella vectensis (Starlet sea anemone) protein is Probable cytosolic Fe-S cluster assembly factor v1g210509.